Consider the following 233-residue polypeptide: MGEEDTATVDQNSFGGGKDSLLRNRHSSPLPSPTQLSSKVITLPTVLTLGRVAAVPILVATFYVDCWWGRTATTSIFIAAAITDWLDGYIARKMRLGSEFGAFLDPVADKLMVAATLILLCTKPMVAVVLGPVPWLVTVPSIAIIGREITMSAVREWAASQNGKLSEAVAVNSLGKWKTATQMIALTILLASRDSSFERLLPSGIGLLYVSAGLSIWSLVVYMRKIWRVLLKK.

The disordered stretch occupies residues 1-23 (MGEEDTATVDQNSFGGGKDSLLR). A run of 5 helical transmembrane segments spans residues 40-60 (VITL…ILVA), 71-91 (TATT…GYIA), 100-120 (FGAF…LILL), 125-145 (MVAV…IAII), and 201-221 (LPSG…SLVV).

Belongs to the CDP-alcohol phosphatidyltransferase class-I family. Mn(2+) serves as cofactor.

The protein resides in the microsome membrane. Its subcellular location is the endoplasmic reticulum membrane. The enzyme catalyses a CDP-1,2-diacyl-sn-glycerol + sn-glycerol 3-phosphate = a 1,2-diacyl-sn-glycero-3-phospho-(1'-sn-glycero-3'-phosphate) + CMP + H(+). The protein operates within phospholipid metabolism; phosphatidylglycerol biosynthesis; phosphatidylglycerol from CDP-diacylglycerol: step 1/2. Catalyzes the committed step to the synthesis of the acidic phospholipids, including phosphatidylglycerol (PG). Together with PGPS1, required for the proper embryo development by providing PG accurate levels. This chain is CDP-diacylglycerol--glycerol-3-phosphate 3-phosphatidyltransferase 2, found in Arabidopsis thaliana (Mouse-ear cress).